Consider the following 222-residue polypeptide: ATP synthase F(0) complex subunit a (222 aa).

6 helical membrane passes run 7–27 (AFFD…AILL), 64–84 (WSLM…LGLL), 93–113 (QLTV…VLGF), 132–152 (FLIP…PITL), 160–180 (ITAG…LLSV), and 197–219 (ILEL…LYLH).

It belongs to the ATPase A chain family. In terms of assembly, component of the ATP synthase complex composed at least of ATP5F1A/subunit alpha, ATP5F1B/subunit beta, ATP5MC1/subunit c (homooctomer), MT-ATP6/subunit a, MT-ATP8/subunit 8, ATP5ME/subunit e, ATP5MF/subunit f, ATP5MG/subunit g, ATP5MK/subunit k, ATP5MJ/subunit j, ATP5F1C/subunit gamma, ATP5F1D/subunit delta, ATP5F1E/subunit epsilon, ATP5PF/subunit F6, ATP5PB/subunit b, ATP5PD/subunit d, ATP5PO/subunit OSCP. ATP synthase complex consists of a soluble F(1) head domain (subunits alpha(3) and beta(3)) - the catalytic core - and a membrane F(0) domain - the membrane proton channel (subunits c, a, 8, e, f, g, k and j). These two domains are linked by a central stalk (subunits gamma, delta, and epsilon) rotating inside the F1 region and a stationary peripheral stalk (subunits F6, b, d, and OSCP). Interacts with DNAJC30; interaction is direct.

It is found in the mitochondrion inner membrane. It carries out the reaction H(+)(in) = H(+)(out). Its function is as follows. Subunit a, of the mitochondrial membrane ATP synthase complex (F(1)F(0) ATP synthase or Complex V) that produces ATP from ADP in the presence of a proton gradient across the membrane which is generated by electron transport complexes of the respiratory chain. ATP synthase complex consist of a soluble F(1) head domain - the catalytic core - and a membrane F(1) domain - the membrane proton channel. These two domains are linked by a central stalk rotating inside the F(1) region and a stationary peripheral stalk. During catalysis, ATP synthesis in the catalytic domain of F(1) is coupled via a rotary mechanism of the central stalk subunits to proton translocation. With the subunit c (ATP5MC1), forms the proton-conducting channel in the F(0) domain, that contains two crucial half-channels (inlet and outlet) that facilitate proton movement from the mitochondrial intermembrane space (IMS) into the matrix. Protons are taken up via the inlet half-channel and released through the outlet half-channel, following a Grotthuss mechanism. In Elephas maximus (Indian elephant), this protein is ATP synthase F(0) complex subunit a.